A 48-amino-acid polypeptide reads, in one-letter code: uncharacterized protein (48 aa).

This is an uncharacterized protein from Haemophilus influenzae (strain ATCC 51907 / DSM 11121 / KW20 / Rd).